A 305-amino-acid chain; its full sequence is MAKRDILSVLDMKNDLDEIINLSIELKKNRYRSYESLRNKMLGLIFEKPSTRTRTSLEVAIDQLGGHAVYLNPSEMQLGRGETISDTGHVLSRFLDAIAYRAFDHKNVVELARSTSIPVINALDDVEHPLQIVADFMTVKEKKGKFSGLKFSYIGDGNNMANSLMLGAAILGVDIYVATPHGYEPKSEFVDKAKQVAKERGSKVIITNDAIEAAKDADVIYTDVWISMGEESKRGEKEKAFTKYQINSDLVSNAKKDYIFMHCLPAHRGLEVTDDVADSINSVIFDEAENRLHSEKGVLYKLLSY.

Residues 50 to 53, glutamine 77, arginine 101, and 128 to 131 contribute to the carbamoyl phosphate site; these read STRT and HPLQ. L-ornithine-binding positions include asparagine 159, aspartate 223, and 227–228; that span reads SM. Residues 263–264 and arginine 291 contribute to the carbamoyl phosphate site; that span reads CL.

The protein belongs to the aspartate/ornithine carbamoyltransferase superfamily. OTCase family.

The protein localises to the cytoplasm. The enzyme catalyses carbamoyl phosphate + L-ornithine = L-citrulline + phosphate + H(+). It functions in the pathway amino-acid degradation; L-arginine degradation via ADI pathway; carbamoyl phosphate from L-arginine: step 2/2. Reversibly catalyzes the transfer of the carbamoyl group from carbamoyl phosphate (CP) to the N(epsilon) atom of ornithine (ORN) to produce L-citrulline. This is Ornithine carbamoyltransferase, catabolic from Thermoplasma volcanium (strain ATCC 51530 / DSM 4299 / JCM 9571 / NBRC 15438 / GSS1).